A 342-amino-acid chain; its full sequence is Thioredoxin reductase 2, mitochondrial (342 aa).

The N-terminal 23 residues, 1–23, are a transit peptide targeting the mitochondrion; the sequence is MIKHIVSPFRTNFVGISKSVLSR. FAD is bound by residues 34–37, 56–68, 63–64, Gln-68, Asn-77, Val-110, Cys-168, Asp-311, 311–320, and 318–320; these read SGPA, EGMM…AGGQ, IA, DVQDSRYRQA, and RQA. Residues Cys-165 and Cys-168 are joined by a disulfide bond.

Belongs to the class-II pyridine nucleotide-disulfide oxidoreductase family. Homodimer. The cofactor is FAD.

It is found in the mitochondrion. It carries out the reaction [thioredoxin]-dithiol + NADP(+) = [thioredoxin]-disulfide + NADPH + H(+). In terms of biological role, acts on mitochondrial thioredoxin 3. Implicated in the defense against oxidative stress. This chain is Thioredoxin reductase 2, mitochondrial, found in Saccharomyces cerevisiae (strain ATCC 204508 / S288c) (Baker's yeast).